Here is an 86-residue protein sequence, read N- to C-terminus: Putative antitoxin VapB5 (86 aa).

It belongs to the phD/YefM antitoxin family. As to quaternary structure, forms a complex with VapC5.

Probable antitoxin component of a probable type II toxin-antitoxin (TA) system. The cognate toxin is VapC5. The sequence is that of Putative antitoxin VapB5 (vapB5) from Mycobacterium tuberculosis (strain CDC 1551 / Oshkosh).